Consider the following 1775-residue polypeptide: Stereocilin (1775 aa).

The first 22 residues, Met-1–Val-22, serve as a signal peptide directing secretion. Residues Asn-65, Asn-202, Asn-297, Asn-366, Asn-427, Asn-476, Asn-540, Asn-565, Asn-656, Asn-824, Asn-916, Asn-964, Asn-1179, and Asn-1274 are each glycosylated (N-linked (GlcNAc...) asparagine).

Belongs to the stereocilin family.

Its subcellular location is the cell surface. The protein localises to the cell projection. The protein resides in the kinocilium. It localises to the stereocilium. Its function is as follows. Essential to the formation of horizontal top connectors between outer hair cell stereocilia. The chain is Stereocilin (STRC) from Homo sapiens (Human).